Reading from the N-terminus, the 172-residue chain is 3-hydroxydecanoyl-[acyl-carrier-protein] dehydratase (172 aa).

The active site involves His71.

This sequence belongs to the thioester dehydratase family. FabA subfamily. As to quaternary structure, homodimer.

Its subcellular location is the cytoplasm. It carries out the reaction a (3R)-hydroxyacyl-[ACP] = a (2E)-enoyl-[ACP] + H2O. The catalysed reaction is (3R)-hydroxydecanoyl-[ACP] = (2E)-decenoyl-[ACP] + H2O. It catalyses the reaction (2E)-decenoyl-[ACP] = (3Z)-decenoyl-[ACP]. The protein operates within lipid metabolism; fatty acid biosynthesis. Its function is as follows. Necessary for the introduction of cis unsaturation into fatty acids. Catalyzes the dehydration of (3R)-3-hydroxydecanoyl-ACP to E-(2)-decenoyl-ACP and then its isomerization to Z-(3)-decenoyl-ACP. Can catalyze the dehydratase reaction for beta-hydroxyacyl-ACPs with saturated chain lengths up to 16:0, being most active on intermediate chain length. This is 3-hydroxydecanoyl-[acyl-carrier-protein] dehydratase from Salmonella choleraesuis (strain SC-B67).